A 109-amino-acid polypeptide reads, in one-letter code: Cell division suppressor protein YneA (109 aa).

One can recognise a LysM domain in the interval Ser40–Ile94.

Belongs to the YneA family.

The protein localises to the cytoplasm. Its function is as follows. Inhibits cell division during the SOS response. Affects a later stage of the cell division protein assembly, after the assembly of the Z ring, by probably suppressing recruitment of FtsL and/or DivIC to the division machinery. The sequence is that of Cell division suppressor protein YneA from Priestia megaterium (strain DSM 319 / IMG 1521) (Bacillus megaterium).